The sequence spans 486 residues: Glutamyl-tRNA(Gln) amidotransferase subunit A (486 aa).

Active-site charge relay system residues include Lys-79 and Ser-154. The Acyl-ester intermediate role is filled by Ser-178.

The protein belongs to the amidase family. GatA subfamily. In terms of assembly, heterotrimer of A, B and C subunits.

It catalyses the reaction L-glutamyl-tRNA(Gln) + L-glutamine + ATP + H2O = L-glutaminyl-tRNA(Gln) + L-glutamate + ADP + phosphate + H(+). Its function is as follows. Allows the formation of correctly charged Gln-tRNA(Gln) through the transamidation of misacylated Glu-tRNA(Gln) in organisms which lack glutaminyl-tRNA synthetase. The reaction takes place in the presence of glutamine and ATP through an activated gamma-phospho-Glu-tRNA(Gln). This Dehalococcoides mccartyi (strain CBDB1) protein is Glutamyl-tRNA(Gln) amidotransferase subunit A.